The following is a 117-amino-acid chain: uncharacterized protein (117 aa).

Residues 1–21 traverse the membrane as a helical segment; sequence MEIAIIALFIVSIALIAFSYS. Positions 38 to 67 form a coiled coil; that stretch reads LSAMQEIYKLKKKMTVLEEELLETNLVIRK.

The protein localises to the cell membrane. This is an uncharacterized protein from Bacillus subtilis (strain 168).